We begin with the raw amino-acid sequence, 227 residues long: Cytochrome c oxidase subunit 2 (227 aa).

The Mitochondrial intermembrane segment spans residues 1–14; the sequence is MAYPFQLGLQDATS. The chain crosses the membrane as a helical span at residues 15-45; it reads PIMEELLHFHDHTLMIVFLISSLVLYIISLM. At 46–59 the chain is on the mitochondrial matrix side; that stretch reads LTTKLTHTSTMDAQ. The chain crosses the membrane as a helical span at residues 60–87; that stretch reads EVETVWTILPAIILILIALPSLRILYMM. Residues 88 to 227 are Mitochondrial intermembrane-facing; it reads DEINNPSLTV…YFETWSALMV (140 aa). 6 residues coordinate Cu cation: His-161, Cys-196, Glu-198, Cys-200, His-204, and Met-207. Glu-198 contacts Mg(2+). Tyr-218 carries the post-translational modification Phosphotyrosine.

Belongs to the cytochrome c oxidase subunit 2 family. As to quaternary structure, component of the cytochrome c oxidase (complex IV, CIV), a multisubunit enzyme composed of 14 subunits. The complex is composed of a catalytic core of 3 subunits MT-CO1, MT-CO2 and MT-CO3, encoded in the mitochondrial DNA, and 11 supernumerary subunits COX4I, COX5A, COX5B, COX6A, COX6B, COX6C, COX7A, COX7B, COX7C, COX8 and NDUFA4, which are encoded in the nuclear genome. The complex exists as a monomer or a dimer and forms supercomplexes (SCs) in the inner mitochondrial membrane with NADH-ubiquinone oxidoreductase (complex I, CI) and ubiquinol-cytochrome c oxidoreductase (cytochrome b-c1 complex, complex III, CIII), resulting in different assemblies (supercomplex SCI(1)III(2)IV(1) and megacomplex MCI(2)III(2)IV(2)). Found in a complex with TMEM177, COA6, COX18, COX20, SCO1 and SCO2. Interacts with TMEM177 in a COX20-dependent manner. Interacts with COX20. Interacts with COX16. Requires Cu cation as cofactor.

Its subcellular location is the mitochondrion inner membrane. The enzyme catalyses 4 Fe(II)-[cytochrome c] + O2 + 8 H(+)(in) = 4 Fe(III)-[cytochrome c] + 2 H2O + 4 H(+)(out). Its function is as follows. Component of the cytochrome c oxidase, the last enzyme in the mitochondrial electron transport chain which drives oxidative phosphorylation. The respiratory chain contains 3 multisubunit complexes succinate dehydrogenase (complex II, CII), ubiquinol-cytochrome c oxidoreductase (cytochrome b-c1 complex, complex III, CIII) and cytochrome c oxidase (complex IV, CIV), that cooperate to transfer electrons derived from NADH and succinate to molecular oxygen, creating an electrochemical gradient over the inner membrane that drives transmembrane transport and the ATP synthase. Cytochrome c oxidase is the component of the respiratory chain that catalyzes the reduction of oxygen to water. Electrons originating from reduced cytochrome c in the intermembrane space (IMS) are transferred via the dinuclear copper A center (CU(A)) of subunit 2 and heme A of subunit 1 to the active site in subunit 1, a binuclear center (BNC) formed by heme A3 and copper B (CU(B)). The BNC reduces molecular oxygen to 2 water molecules using 4 electrons from cytochrome c in the IMS and 4 protons from the mitochondrial matrix. The chain is Cytochrome c oxidase subunit 2 (MT-CO2) from Canis lupus familiaris (Dog).